Reading from the N-terminus, the 1382-residue chain is Hepatocyte growth factor receptor (1382 aa).

The signal sequence occupies residues 1–24 (MKAPAVLAPGILVLLFTLVQKSYG). The Extracellular portion of the chain corresponds to 25 to 933 (ECREALVKSE…VIVQPDQNFT (909 aa)). In terms of domain architecture, Sema spans 27–516 (REALVKSEMN…TGKKITKIPL (490 aa)). N45 is a glycosylation site (N-linked (GlcNAc...) asparagine). Disulfide bonds link C95–C101, C98–C160, C133–C141, and C173–C176. The N-linked (GlcNAc...) asparagine glycan is linked to N106. N203 and N359 each carry an N-linked (GlcNAc...) asparagine glycan. 2 disulfide bridges follow: C299/C364 and C386/C398. 2 N-linked (GlcNAc...) asparagine glycosylation sites follow: N400 and N406. Cystine bridges form between C521–C539, C527–C562, C530–C546, and C542–C552. IPT/TIG domains are found at residues 564-656 (PTIY…FSYV), 658-740 (PVIT…FSYQ), and 743-837 (PIVY…LIYV). An O-linked (Man) threonine glycan is attached at T583. N608 and N636 each carry an N-linked (GlcNAc...) asparagine glycan. Residues T677 and T762 are each glycosylated (O-linked (Man) threonine). 3 N-linked (GlcNAc...) asparagine glycosylation sites follow: N786, N880, and N931. A helical transmembrane segment spans residues 934-956 (GLIVGVISISIILLLLLGVFLWL). The Cytoplasmic segment spans residues 957-1382 (KKRKQIKDLG…QDNIDGEGDT (426 aa)). At S967 the chain carries Phosphoserine. T978 is subject to Phosphothreonine. A phosphoserine mark is found at S991, S998, and S1001. Residue Y1004 is modified to Phosphotyrosine. The 268-residue stretch at 1079-1346 (VHFNEVIGRG…RISAIFSTFI (268 aa)) folds into the Protein kinase domain. Residues 1085–1093 (IGRGHFGCV) and K1111 each bind ATP. D1205 (proton acceptor) is an active-site residue. The interaction with RANBP9 stretch occupies residues 1213–1382 (LDEKFTVKVA…QDNIDGEGDT (170 aa)). Phosphotyrosine is present on Y1231. 2 positions are modified to phosphotyrosine; by autocatalysis: Y1235 and Y1236. A Phosphothreonine modification is found at T1290. The interval 1321-1360 (WHPKAELRPSFSELVSRISAIFSTFIGEHYVHVNATYVNV) is interaction with MUC20. Phosphotyrosine; by autocatalysis is present on residues Y1350 and Y1357. Y1366 is modified (phosphotyrosine).

This sequence belongs to the protein kinase superfamily. Tyr protein kinase family. Heterodimer made of an alpha chain (50 kDa) and a beta chain (145 kDa) which are disulfide linked. Binds PLXNB1. Interacts when phosphorylated with downstream effectors including STAT3, PIK3R1, SRC, PCLG1, GRB2 and GAB1. Interacts with SPSB1, SPSB2 and SPSB4. Interacts with INPP5D/SHIP1. When phosphorylated at Tyr-1357, interacts with INPPL1/SHIP2. Interacts with RANBP9 and RANBP10, as well as SPSB1, SPSB2, SPSB3 and SPSB4. SPSB1 binding occurs in the presence and in the absence of HGF, however HGF treatment has a positive effect on this interaction. Interacts with MUC20; prevents interaction with GRB2 and suppresses hepatocyte growth factor-induced cell proliferation. Interacts with GRB10. Interacts with PTPN1 and PTPN2. Interacts with HSP90AA1 and HSP90AB1; the interaction suppresses MET kinase activity. Interacts with tensin TNS3. Interacts (when phosphorylated) with tensin TNS4 (via SH2 domain); the interaction increases MET protein stability by inhibiting MET endocytosis and subsequent lysosomal degradation. In terms of processing, autophosphorylated in response to ligand binding on Tyr-1235 and Tyr-1236 in the kinase domain leading to further phosphorylation of Tyr-1350 and Tyr-1357 in the C-terminal multifunctional docking site. Dephosphorylated by PTPRJ at Tyr-1350 and Tyr-1366. Dephosphorylated by PTPN1 and PTPN2. Post-translationally, ubiquitinated. Ubiquitination by CBL regulates the receptor stability and activity through proteasomal degradation. O-mannosylation of IPT/TIG domains by TMEM260 is required for protein maturation. O-mannosylated residues are composed of single mannose glycans that are not elongated or modified.

It is found in the membrane. The enzyme catalyses L-tyrosyl-[protein] + ATP = O-phospho-L-tyrosyl-[protein] + ADP + H(+). With respect to regulation, in its inactive state, the C-terminal tail interacts with the catalytic domain and inhibits the kinase activity. Upon ligand binding, the C-terminal tail is displaced and becomes phosphorylated, thus increasing the kinase activity. Receptor tyrosine kinase that transduces signals from the extracellular matrix into the cytoplasm by binding to hepatocyte growth factor/HGF ligand. Regulates many physiological processes including proliferation, scattering, morphogenesis and survival. Ligand binding at the cell surface induces autophosphorylation of MET on its intracellular domain that provides docking sites for downstream signaling molecules. Following activation by ligand, interacts with the PI3-kinase subunit PIK3R1, PLCG1, SRC, GRB2, STAT3 or the adapter GAB1. Recruitment of these downstream effectors by MET leads to the activation of several signaling cascades including the RAS-ERK, PI3 kinase-AKT, or PLCgamma-PKC. The RAS-ERK activation is associated with the morphogenetic effects while PI3K/AKT coordinates prosurvival effects. During embryonic development, MET signaling plays a role in gastrulation, development and migration of muscles and neuronal precursors, angiogenesis and kidney formation. In adults, participates in wound healing as well as organ regeneration and tissue remodeling. Also promotes differentiation and proliferation of hematopoietic cells. In Felis catus (Cat), this protein is Hepatocyte growth factor receptor (MET).